An 851-amino-acid chain; its full sequence is Probable alpha,alpha-trehalose-phosphate synthase [UDP-forming] 7 (851 aa).

Ser-5 bears the Phosphoserine mark. Thr-32 is subject to Phosphothreonine. Residues 59 to 540 (DRMIIVANRL…SRSFLQDLER (482 aa)) form a glycosyltransferase region.

In the N-terminal section; belongs to the glycosyltransferase 20 family. It in the C-terminal section; belongs to the trehalose phosphatase family. As to quaternary structure, binds to the phosphopeptide-binding site of GRF/14-3-3. Phosphorylated. Expressed in seedlings, leaves, roots, stems, flowers and siliques.

It catalyses the reaction D-glucose 6-phosphate + UDP-alpha-D-glucose = alpha,alpha-trehalose 6-phosphate + UDP + H(+). The chain is Probable alpha,alpha-trehalose-phosphate synthase [UDP-forming] 7 (TPS7) from Arabidopsis thaliana (Mouse-ear cress).